Here is a 164-residue protein sequence, read N- to C-terminus: Glycine cleavage system H protein, mitochondrial (164 aa).

A mitochondrion-targeting transit peptide spans 1-34; that stretch reads MALRLWASSAANALKISCSGATRAAPAYSISRYF. The Lipoyl-binding domain occupies 56 to 138; it reads VATIGITDHA…YEDGWMIKVK (83 aa). The residue at position 97 (Lys-97) is an N6-lipoyllysine.

It belongs to the GcvH family. As to quaternary structure, the glycine cleavage system is composed of four proteins: P, T, L and H. Requires (R)-lipoate as cofactor.

The protein localises to the mitochondrion. Functionally, the glycine cleavage system catalyzes the degradation of glycine. The H protein shuttles the methylamine group of glycine from the P protein to the T protein. This Oryza sativa subsp. indica (Rice) protein is Glycine cleavage system H protein, mitochondrial (GDCSH).